A 109-amino-acid chain; its full sequence is Globin (109 aa).

The Globin domain occupies 3 to 109 (PLTAAEVSSL…IFPIAGIHAL (107 aa)).

Belongs to the globin family. In terms of assembly, monomer.

Functionally, oxygen binding protein. This is Globin from Dicrocoelium dendriticum (Small liver fluke).